A 3124-amino-acid chain; its full sequence is Collagen alpha-1(XII) chain (3124 aa).

Positions 1–23 (MRTALCSAVAALCAAALLSSIEA) are cleaved as a signal peptide. The region spanning 27–117 (PPSDLNFTII…GQLTIQTGGP (91 aa)) is the Fibronectin type-III 1 domain. Asparagine 32 is a glycosylation site (N-linked (GlcNAc...) asparagine). One can recognise a VWFA 1 domain in the interval 139 to 311 (DLVFLVDGSW…DGIVDIQNEI (173 aa)). A glycan (O-linked (Xyl...) (chondroitin sulfate) serine) is linked at serine 328. Residues 335–424 (PASNLVATQI…ITIMEKTQQV (90 aa)) form the Fibronectin type-III 2 domain. Residues 439 to 615 (DVVFLVDGSY…RISFELTQSV (177 aa)) form the VWFA 2 domain. Fibronectin type-III domains are found at residues 633–722 (PAKN…LEVK), 724–815 (APRN…VRGN), 816–906 (PRNL…LEER), 908–998 (SPRN…VSQS), 999–1087 (ARTV…ASPF), and 1089–1179 (PPRN…TLSD). 3 O-linked (Xyl...) (chondroitin sulfate) serine glycosylation sites follow: serine 797, serine 890, and serine 981. Residues asparagine 1006, asparagine 1032, and asparagine 1044 are each glycosylated (N-linked (GlcNAc...) asparagine). The tract at residues 1075 to 1100 (KSRKAEGTTASPFKPPRNLRTSDSTM) is disordered. Residues 1199 to 1371 (DIVLLVDGSW…SFLASIGEDV (173 aa)) form the VWFA 3 domain. Fibronectin type-III domains lie at 1387–1476 (PPSN…YPLS), 1477–1568 (SVRN…LPLP), 1569–1659 (GPRG…VPSP), 1660–1756 (VNLR…TPAP), 1759–1853 (GPRN…TVKN), 1854–1939 (MLVY…LERG), 1940–2030 (TPRN…LPRS), 2031–2121 (GPRN…VGLL), 2122–2210 (PPQN…LYLN), and 2211–2299 (VTDL…LKPT). The N-linked (GlcNAc...) asparagine glycan is linked to asparagine 1512. N-linked (GlcNAc...) asparagine glycosylation occurs at asparagine 1767. Residues asparagine 2210 and asparagine 2273 are each glycosylated (N-linked (GlcNAc...) asparagine). Residues 2327–2500 (DIVFLTDASW…DAFEKIQDNL (174 aa)) enclose the VWFA 4 domain. Residues 2455-2750 (SGFSVFVVGV…NACTCTQDSV (296 aa)) are nonhelical region (NC3). Positions 2524 to 2716 (GFKMLESYNL…IQNFDIVCSP (193 aa)) constitute a Laminin G-like domain. 2 N-linked (GlcNAc...) asparagine glycosylation sites follow: asparagine 2532 and asparagine 2683. 2 disordered regions span residues 2749 to 2900 (SVGP…GDRG) and 2935 to 3080 (PNDY…EGEP). Collagen-like domains follow at residues 2751-2802 (GPPG…GPNG), 2807-2858 (GEPG…GPRG), and 2859-2900 (PPGP…GDRG). The interval 2751–2902 (GPPGPPGPPG…KGEKGDRGDI (152 aa)) is triple-helical region (COL2) with 1 imperfection. Pro residues-rich tracts occupy residues 2752-2761 (PPGPPGPPGG) and 2788-2798 (PPGPQGPPGPQ). The span at 2821–2830 (PGLPGRSGTP) shows a compositional bias: low complexity. Pro residues predominate over residues 2832 to 2841 (LPGPPGPVGP). 2 stretches are compositionally biased toward low complexity: residues 2842-2854 (PGERGFTGKDGPT) and 2865-2878 (APGVPGVAGPSGKP). Residues 2899–2901 (RGD) carry the Cell attachment site motif. A nonhelical region (NC2) region spans residues 2903 to 2945 (ASQNMMRAVARQVCEQLINGQMSRFNQMLNQIPNDYYSNRNQP). Residues 2935-2944 (PNDYYSNRNQ) show a composition bias toward polar residues. The span at 2945–2954 (PGPPGPPGPP) shows a compositional bias: pro residues. Residues 2945-2994 (PGPPGPPGPPGAAGTRGEPGPGGRPGFPGPPGVQGPPGERGMPGEKGERG) form the Collagen-like 4 domain. A triple-helical region (COL1) with 2 imperfections region spans residues 2946-3048 (GPPGPPGPPG…RGPPGPPGYC (103 aa)). Positions 2961-2970 (GEPGPGGRPG) are enriched in gly residues. Over residues 3010–3024 (QGESRTGPPGSTGSR) the composition is skewed to low complexity. A nonhelical region (NC1) region spans residues 3049–3124 (DSSQCASIPY…SLSRKAKRKP (76 aa)).

Belongs to the fibril-associated collagens with interrupted helices (FACIT) family. Trimer of identical chains each containing 190 kDa of non-triple-helical sequences. Post-translationally, the triple-helical tail is stabilized by disulfide bonds at each end. In terms of processing, prolines at the third position of the tripeptide repeating unit (G-X-Y) are hydroxylated in some or all of the chains. O-glycosylated; glycosaminoglycan of chondroitin-sulfate type. In terms of tissue distribution, type XII collagen is present in tendons, ligaments, perichondrium, and periosteum, all dense connective tissues containing type I collagen.

The protein localises to the secreted. The protein resides in the extracellular space. It localises to the extracellular matrix. Its function is as follows. Type XII collagen interacts with type I collagen-containing fibrils, the COL1 domain could be associated with the surface of the fibrils, and the COL2 and NC3 domains may be localized in the perifibrillar matrix. In Gallus gallus (Chicken), this protein is Collagen alpha-1(XII) chain (COL12A1).